We begin with the raw amino-acid sequence, 226 residues long: UPF0173 metal-dependent hydrolase Dgeo_0136 (226 aa).

This sequence belongs to the UPF0173 family.

The sequence is that of UPF0173 metal-dependent hydrolase Dgeo_0136 from Deinococcus geothermalis (strain DSM 11300 / CIP 105573 / AG-3a).